The sequence spans 420 residues: Phosphoglycerate kinase (420 aa).

V24, D25, F26, N27, R40, S63, H64, G66, R67, L122, R123, H170, and R171 together coordinate (2R)-3-phosphoglycerate. G214 provides a ligand contact to ADP. G214 is a binding site for CDP. AMP-binding residues include A215 and K216. Residue A215 participates in ATP binding. Position 215 (A215) interacts with Mg(2+). CDP is bound at residue D219. A Mg(2+)-binding site is contributed by D219. K220 is an AMP binding site. K220 provides a ligand contact to ATP. G238 is an ADP binding site. G238 lines the CDP pocket. AMP contacts are provided by G239 and G313. ATP is bound by residues G239 and G313. CDP is bound by residues G338 and F343. F343 is an ADP binding site. Position 344 (E344) interacts with AMP. Positions 344, 375, and 376 each coordinate ATP. D375 contacts Mg(2+).

It belongs to the phosphoglycerate kinase family. Monomer. Mg(2+) is required as a cofactor.

It carries out the reaction (2R)-3-phosphoglycerate + ATP = (2R)-3-phospho-glyceroyl phosphate + ADP. It functions in the pathway carbohydrate degradation; glycolysis; pyruvate from D-glyceraldehyde 3-phosphate: step 2/5. This chain is Phosphoglycerate kinase (PGK), found in Tetrahymena thermophila.